The chain runs to 490 residues: Aspartyl aminopeptidase 4 (490 aa).

His-97 serves as a coordination point for Zn(2+). A substrate-binding site is contributed by His-173. 4 residues coordinate Zn(2+): Asp-273, Glu-308, Glu-309, and Asp-362. Residue Glu-308 coordinates substrate. The substrate site is built by Asp-362, His-365, Lys-390, and Tyr-397. His-456 is a binding site for Zn(2+).

Belongs to the peptidase M18 family. Tetrahedron-shaped homododecamer built from six homodimers. Requires Zn(2+) as cofactor.

It is found in the cytoplasm. It localises to the vacuole lumen. The catalysed reaction is Release of an N-terminal aspartate or glutamate from a peptide, with a preference for aspartate.. The metalloproteases inhibitors EDTA and 1.10-phenanthroline both inhibit the activity, whereas bestatin, an inhibitor of most aminopeptidases, does not affect enzyme activity. Its function is as follows. Aspartyl aminopeptidase that contributes to peptide degradation both in the cytosol and the vacuole. Cells may respond to environmental conditions by changing the distributions of the cytosolic enzyme to the vacuole when cells need more active vacuolar degradation. The polypeptide is Aspartyl aminopeptidase 4 (APE4) (Saccharomyces cerevisiae (strain ATCC 204508 / S288c) (Baker's yeast)).